We begin with the raw amino-acid sequence, 205 residues long: Small ribosomal subunit protein uS4 (205 aa).

Residues 19 to 45 (IWGRPKSPVNRREYGPGQHGQRRKGKL) are disordered. In terms of domain architecture, S4 RNA-binding spans 94–157 (SRLDAVVYRA…KQLAIVLEAV (64 aa)).

Belongs to the universal ribosomal protein uS4 family. As to quaternary structure, part of the 30S ribosomal subunit. Contacts protein S5. The interaction surface between S4 and S5 is involved in control of translational fidelity.

Its function is as follows. One of the primary rRNA binding proteins, it binds directly to 16S rRNA where it nucleates assembly of the body of the 30S subunit. Functionally, with S5 and S12 plays an important role in translational accuracy. The protein is Small ribosomal subunit protein uS4 of Brucella suis biovar 1 (strain 1330).